A 426-amino-acid polypeptide reads, in one-letter code: D-tagatose-1,6-bisphosphate aldolase subunit KbaZ (426 aa).

Belongs to the GatZ/KbaZ family. KbaZ subfamily. In terms of assembly, forms a complex with KbaY.

It functions in the pathway carbohydrate metabolism; D-tagatose 6-phosphate degradation; D-glyceraldehyde 3-phosphate and glycerone phosphate from D-tagatose 6-phosphate: step 2/2. Its function is as follows. Component of the tagatose-1,6-bisphosphate aldolase KbaYZ that is required for full activity and stability of the Y subunit. Could have a chaperone-like function for the proper and stable folding of KbaY. When expressed alone, KbaZ does not show any aldolase activity. This Escherichia fergusonii (strain ATCC 35469 / DSM 13698 / CCUG 18766 / IAM 14443 / JCM 21226 / LMG 7866 / NBRC 102419 / NCTC 12128 / CDC 0568-73) protein is D-tagatose-1,6-bisphosphate aldolase subunit KbaZ.